The sequence spans 602 residues: Elongation factor 4 (602 aa).

The tr-type G domain maps to 7-189 (DKIRNFSIVA…AIVTRLPPPK (183 aa)). GTP is bound by residues 19–24 (DHGKST) and 136–139 (NKVD).

This sequence belongs to the TRAFAC class translation factor GTPase superfamily. Classic translation factor GTPase family. LepA subfamily.

Its subcellular location is the cell inner membrane. It carries out the reaction GTP + H2O = GDP + phosphate + H(+). Its function is as follows. Required for accurate and efficient protein synthesis under certain stress conditions. May act as a fidelity factor of the translation reaction, by catalyzing a one-codon backward translocation of tRNAs on improperly translocated ribosomes. Back-translocation proceeds from a post-translocation (POST) complex to a pre-translocation (PRE) complex, thus giving elongation factor G a second chance to translocate the tRNAs correctly. Binds to ribosomes in a GTP-dependent manner. The protein is Elongation factor 4 of Caulobacter vibrioides (strain NA1000 / CB15N) (Caulobacter crescentus).